Here is a 405-residue protein sequence, read N- to C-terminus: Mevalonate 3,5-bisphosphate decarboxylase (405 aa).

Belongs to the mevalonate 3,5-bisphosphate decarboxylase family. Homodimer.

The enzyme catalyses (R)-3,5-bisphosphomevalonate + H(+) = isopentenyl phosphate + phosphate + CO2. It functions in the pathway isoprenoid biosynthesis; isopentenyl diphosphate biosynthesis via mevalonate pathway. Catalyzes the ATP-independent decarboxylation of (R)-mevalonate 3,5-bisphosphate to isopentenyl phosphate. Functions in an alternative mevalonate pathway, only present in extreme acidophiles of the Thermoplasmatales order, which passes through mevalonate 3-phosphate rather than mevalonate 5-phosphate. This is Mevalonate 3,5-bisphosphate decarboxylase from Thermoplasma acidophilum (strain ATCC 25905 / DSM 1728 / JCM 9062 / NBRC 15155 / AMRC-C165).